The chain runs to 901 residues: Protein translocase subunit SecA (901 aa).

ATP contacts are provided by residues glutamine 85, 103–107, and aspartate 492; that span reads GEGKT. Residues 828–901 are disordered; the sequence is GLVTDDGGNP…PKNRRNKKRR (74 aa). Basic and acidic residues predominate over residues 871–881; that stretch reads DGQKPRGEGNR. Positions 882-901 are enriched in basic residues; that stretch reads AARRSAASKKPKNRRNKKRR.

It belongs to the SecA family. Monomer and homodimer. Part of the essential Sec protein translocation apparatus which comprises SecA, SecYEG and auxiliary proteins SecDF. Other proteins may also be involved.

The protein resides in the cell membrane. The protein localises to the cytoplasm. It catalyses the reaction ATP + H2O + cellular proteinSide 1 = ADP + phosphate + cellular proteinSide 2.. In terms of biological role, part of the Sec protein translocase complex. Interacts with the SecYEG preprotein conducting channel. Has a central role in coupling the hydrolysis of ATP to the transfer of proteins into and across the cell membrane, serving as an ATP-driven molecular motor driving the stepwise translocation of polypeptide chains across the membrane. The chain is Protein translocase subunit SecA from Cutibacterium acnes (strain DSM 16379 / KPA171202) (Propionibacterium acnes).